Consider the following 77-residue polypeptide: Acyl carrier protein (77 aa).

The 76-residue stretch at 2-77 (SDVADRVKKI…DAVKFISEAS (76 aa)) folds into the Carrier domain. An O-(pantetheine 4'-phosphoryl)serine modification is found at S37.

It belongs to the acyl carrier protein (ACP) family. In terms of processing, 4'-phosphopantetheine is transferred from CoA to a specific serine of apo-ACP by AcpS. This modification is essential for activity because fatty acids are bound in thioester linkage to the sulfhydryl of the prosthetic group.

Its subcellular location is the cytoplasm. It functions in the pathway lipid metabolism; fatty acid biosynthesis. In terms of biological role, carrier of the growing fatty acid chain in fatty acid biosynthesis. The polypeptide is Acyl carrier protein (Ruegeria sp. (strain TM1040) (Silicibacter sp.)).